Reading from the N-terminus, the 281-residue chain is MNRMSNTVIGFLNILTLISSIVLLGSALWMGRSKTTCEHFLQKPLLILGLAILILSVAGLVGACCDVAWVLWVYLFFMVFIIVALMGLTLFGFIVTSHSGGVVVDGRVYKEFKLEAYHPWLKTRVVDTNYWVTIKTCLLGSVTCSKLALWTPLDYLQKDLSPLQSGCCKPPTSCVYNTDTVIQQDPDCYRWNNAATVLCYDCDTCRAGVLETVRRDWHKLSLVNVIVVIFLIAVYCVGCCAFKNAKRPQHYGFPYGRYGMSKSRPGWEQSWSRWWHGRDRY.

Residues 1–7 are Cytoplasmic-facing; sequence MNRMSNT. A helical transmembrane segment spans residues 8–28; the sequence is VIGFLNILTLISSIVLLGSAL. Over 29-44 the chain is Extracellular; the sequence is WMGRSKTTCEHFLQKP. Residues 45–65 form a helical membrane-spanning segment; that stretch reads LLILGLAILILSVAGLVGACC. Residues 66–74 are Cytoplasmic-facing; it reads DVAWVLWVY. The helical transmembrane segment at 75–95 threads the bilayer; sequence LFFMVFIIVALMGLTLFGFIV. Residues 96-221 lie on the Extracellular side of the membrane; it reads TSHSGGVVVD…TVRRDWHKLS (126 aa). The helical transmembrane segment at 222-242 threads the bilayer; that stretch reads LVNVIVVIFLIAVYCVGCCAF. The Cytoplasmic segment spans residues 243–281; that stretch reads KNAKRPQHYGFPYGRYGMSKSRPGWEQSWSRWWHGRDRY.

Belongs to the tetraspanin (TM4SF) family.

It localises to the membrane. May be involved in the regulation of cell differentiation. In Arabidopsis thaliana (Mouse-ear cress), this protein is Tetraspanin-5 (TET5).